The primary structure comprises 401 residues: Phosphoglycerate kinase (401 aa).

Residues 29–31 (DFN), Arg45, 69–72 (HLGR), Arg125, and Arg158 contribute to the substrate site. Residues Lys209, Glu331, and 357 to 360 (GGDT) contribute to the ATP site.

The protein belongs to the phosphoglycerate kinase family. As to quaternary structure, monomer.

The protein resides in the cytoplasm. The enzyme catalyses (2R)-3-phosphoglycerate + ATP = (2R)-3-phospho-glyceroyl phosphate + ADP. The protein operates within carbohydrate degradation; glycolysis; pyruvate from D-glyceraldehyde 3-phosphate: step 2/5. The sequence is that of Phosphoglycerate kinase from Wolinella succinogenes (strain ATCC 29543 / DSM 1740 / CCUG 13145 / JCM 31913 / LMG 7466 / NCTC 11488 / FDC 602W) (Vibrio succinogenes).